The primary structure comprises 448 residues: uncharacterized protein (448 aa).

12 helical membrane-spanning segments follow: residues 14-34, 59-79, 87-107, 120-140, 148-168, 171-191, 250-270, 288-308, 316-333, 338-358, 392-412, and 417-437; these read PFII…YGII, TLLA…GFLA, VPML…TFGN, GLSA…VVGA, GGIF…GGIV, SLGY…DIAL, IFGP…FDAT, LMFG…GAMV, IGKR…LLCI, TSLN…VLAF, FSAY…VAGF, and FNFI…SLMA.

Belongs to the major facilitator superfamily. TCR/Tet family.

The protein resides in the endoplasmic reticulum. It localises to the membrane. This is an uncharacterized protein from Schizosaccharomyces pombe (strain 972 / ATCC 24843) (Fission yeast).